Consider the following 422-residue polypeptide: Platelet-activating factor acetylhydrolase (422 aa).

The signal sequence occupies residues 1–21 (MASLWVRARRVFMKSRASGFS). Ser-266 functions as the Nucleophile in the catalytic mechanism. Asp-289 (charge relay system) is an active-site residue. The N-linked (GlcNAc...) asparagine glycan is linked to Asn-331. His-345 serves as the catalytic Charge relay system.

The protein belongs to the AB hydrolase superfamily. Lipase family. As to expression, plasma.

The protein localises to the secreted. It is found in the extracellular space. The enzyme catalyses a 1-O-alkyl-2-acetyl-sn-glycero-3-phosphocholine + H2O = a 1-O-alkyl-sn-glycero-3-phosphocholine + acetate + H(+). In terms of biological role, modulates the action of platelet-activating factor (PAF) by hydrolyzing the sn-2 ester bond to yield the biologically inactive lyso-PAF. Has a specificity for substrates with a short residue at the sn-2 position. It is inactive against long-chain phospholipids. This is Platelet-activating factor acetylhydrolase (PLA2G7) from Gallus gallus (Chicken).